The chain runs to 392 residues: Formate-dependent phosphoribosylglycinamide formyltransferase (392 aa).

Residues 22–23 (EL) and Glu-82 contribute to the N(1)-(5-phospho-beta-D-ribosyl)glycinamide site. Residues Arg-114, Lys-155, 160–165 (SSGKGQ), 195–198 (EGVV), and Glu-203 each bind ATP. An ATP-grasp domain is found at 119 to 308 (RLAAEELGLP…EFALHVRAFL (190 aa)). Positions 267 and 279 each coordinate Mg(2+). Residues Asp-286, Lys-355, and 362-363 (RR) each bind N(1)-(5-phospho-beta-D-ribosyl)glycinamide.

Belongs to the PurK/PurT family. In terms of assembly, homodimer.

The enzyme catalyses N(1)-(5-phospho-beta-D-ribosyl)glycinamide + formate + ATP = N(2)-formyl-N(1)-(5-phospho-beta-D-ribosyl)glycinamide + ADP + phosphate + H(+). It functions in the pathway purine metabolism; IMP biosynthesis via de novo pathway; N(2)-formyl-N(1)-(5-phospho-D-ribosyl)glycinamide from N(1)-(5-phospho-D-ribosyl)glycinamide (formate route): step 1/1. Involved in the de novo purine biosynthesis. Catalyzes the transfer of formate to 5-phospho-ribosyl-glycinamide (GAR), producing 5-phospho-ribosyl-N-formylglycinamide (FGAR). Formate is provided by PurU via hydrolysis of 10-formyl-tetrahydrofolate. The protein is Formate-dependent phosphoribosylglycinamide formyltransferase of Salmonella arizonae (strain ATCC BAA-731 / CDC346-86 / RSK2980).